A 154-amino-acid chain; its full sequence is Xanthine-guanine phosphoribosyltransferase (154 aa).

Residues 38–39, K71, and 90–98 contribute to the 5-phospho-alpha-D-ribose 1-diphosphate site; these read RG and DDLVDTGGT. K71 lines the GMP pocket. Mg(2+) is bound at residue D91. Positions 94 and 137 each coordinate guanine. Residues D94 and I137 each coordinate xanthine. Residues 94 to 98 and 136 to 137 each bind GMP; these read DTGGT and WI.

Belongs to the purine/pyrimidine phosphoribosyltransferase family. XGPT subfamily. In terms of assembly, homotetramer. Mg(2+) serves as cofactor.

It localises to the cell inner membrane. It catalyses the reaction GMP + diphosphate = guanine + 5-phospho-alpha-D-ribose 1-diphosphate. It carries out the reaction XMP + diphosphate = xanthine + 5-phospho-alpha-D-ribose 1-diphosphate. The catalysed reaction is IMP + diphosphate = hypoxanthine + 5-phospho-alpha-D-ribose 1-diphosphate. Its pathway is purine metabolism; GMP biosynthesis via salvage pathway; GMP from guanine: step 1/1. It functions in the pathway purine metabolism; XMP biosynthesis via salvage pathway; XMP from xanthine: step 1/1. Functionally, purine salvage pathway enzyme that catalyzes the transfer of the ribosyl-5-phosphate group from 5-phospho-alpha-D-ribose 1-diphosphate (PRPP) to the N9 position of the 6-oxopurines guanine and xanthine to form the corresponding ribonucleotides GMP (guanosine 5'-monophosphate) and XMP (xanthosine 5'-monophosphate), with the release of PPi. To a lesser extent, also acts on hypoxanthine. The chain is Xanthine-guanine phosphoribosyltransferase from Buchnera aphidicola subsp. Schizaphis graminum (strain Sg).